The primary structure comprises 454 residues: Putative flavin-containing monoamine oxidase AofH (454 aa).

It belongs to the flavin monoamine oxidase family. The cofactor is FAD.

In Mycobacterium tuberculosis (strain CDC 1551 / Oshkosh), this protein is Putative flavin-containing monoamine oxidase AofH (aofH).